We begin with the raw amino-acid sequence, 254 residues long: Fluoride-specific ion channel FluC 1 (254 aa).

A run of 3 helical transmembrane segments spans residues 19 to 39 (LDIL…TALY), 51 to 71 (IIGM…YGSV), and 80 to 100 (AFLI…VAVL). Positions 58 and 61 each coordinate Na(+).

It belongs to the fluoride channel Fluc/FEX (TC 1.A.43) family.

Its subcellular location is the cell inner membrane. The enzyme catalyses fluoride(in) = fluoride(out). Its activity is regulated as follows. Na(+) is not transported, but it plays an essential structural role and its presence is essential for fluoride channel function. In terms of biological role, fluoride-specific ion channel. Important for reducing fluoride concentration in the cell, thus reducing its toxicity. This Brucella suis biovar 1 (strain 1330) protein is Fluoride-specific ion channel FluC 1.